The primary structure comprises 536 residues: Atrial natriuretic peptide receptor 3 (536 aa).

Positions 1–26 are cleaved as a signal peptide; it reads MRSLLLFTFSACVLLARVLLAGGASS. The propeptide occupies 27 to 40; the sequence is GAGDTRPGSRRRAR. Topologically, residues 41-478 are extracellular; that stretch reads EALAAQKIEV…KSSGGLEESA (438 aa). Residue N81 is glycosylated (N-linked (GlcNAc...) asparagine). Positions 101, 130, and 131 each coordinate chloride. Intrachain disulfides connect C103–C131 and C208–C256. 2 N-linked (GlcNAc...) asparagine glycosylation sites follow: N288 and N389. Residues 479 to 499 form a helical membrane-spanning segment; it reads VTGIVVGALLGAGLLMAFYFF. At 500–536 the chain is on the cytoplasmic side; it reads RKKYRITIERRNQQEESNIGKHRELREDSIRSHFSVA.

The protein belongs to the ANF receptor family. As to quaternary structure, homodimer; disulfide-linked. Interacts with OSTN.

The protein resides in the cell membrane. Receptor for the natriuretic peptide hormones, binding with similar affinities atrial natriuretic peptide NPPA/ANP, brain natriuretic peptide NPPB/BNP, and C-type natriuretic peptide NPPC/CNP. May function as a clearance receptor for NPPA, NPPB and NPPC, regulating their local concentrations and effects. Acts as a regulator of osteoblast differentiation and bone growth by binding to its ligand osteocrin, thereby preventing binding between NPR3/NPR-C and natriuretic peptides, leading to increase cGMP production. This is Atrial natriuretic peptide receptor 3 (Npr3) from Mus musculus (Mouse).